Reading from the N-terminus, the 136-residue chain is Large ribosomal subunit protein eL27B (136 aa).

Belongs to the eukaryotic ribosomal protein eL27 family. Component of the large ribosomal subunit (LSU). Mature yeast ribosomes consist of a small (40S) and a large (60S) subunit. The 40S small subunit contains 1 molecule of ribosomal RNA (18S rRNA) and 33 different proteins (encoded by 57 genes). The large 60S subunit contains 3 rRNA molecules (25S, 5.8S and 5S rRNA) and 46 different proteins (encoded by 81 genes).

The protein resides in the cytoplasm. Functionally, component of the ribosome, a large ribonucleoprotein complex responsible for the synthesis of proteins in the cell. The small ribosomal subunit (SSU) binds messenger RNAs (mRNAs) and translates the encoded message by selecting cognate aminoacyl-transfer RNA (tRNA) molecules. The large subunit (LSU) contains the ribosomal catalytic site termed the peptidyl transferase center (PTC), which catalyzes the formation of peptide bonds, thereby polymerizing the amino acids delivered by tRNAs into a polypeptide chain. The nascent polypeptides leave the ribosome through a tunnel in the LSU and interact with protein factors that function in enzymatic processing, targeting, and the membrane insertion of nascent chains at the exit of the ribosomal tunnel. In Saccharomyces cerevisiae (strain ATCC 204508 / S288c) (Baker's yeast), this protein is Large ribosomal subunit protein eL27B.